Consider the following 62-residue polypeptide: Bowman-Birk type proteinase inhibitor (62 aa).

Cystine bridges form between Cys8–Cys61, Cys9–Cys24, Cys12–Cys57, Cys14–Cys22, Cys31–Cys38, Cys35–Cys50, and Cys40–Cys48.

In terms of assembly, forms a monomer at protein concentrations of below 1 mM. At concentrations of above 2 mM, self-associates.

Functionally, inhibits trypsin but not chymotrypsin. Inhibits the trypsin-like proteinase activity present in larvae of the crop pests Adoxophyes orana, Hyphantria cunea, Lobesia botrana and Ostrinia nubilalis. The protein is Bowman-Birk type proteinase inhibitor of Medicago scutellata (Snail medic).